Here is a 175-residue protein sequence, read N- to C-terminus: MERTAIYAGSFDPVTNGHLDILKRGLKLFDRIIVAILINPNKQYLFSVEERISMLEEVTKEIPNTEIDTFSGLLVDYAEQKQAHAILRGMRAVSDFEYEFQLALMNRRLNREVQTVFLMTGLRWIFTSSSIIKEAARFGGNIHGMVPELVERRIDKKMKDTGLYIPPKNNKKQKG.

Ser-10 contacts substrate. ATP is bound by residues 10–11 (SF) and His-18. Substrate is bound by residues Lys-42, Leu-74, and Arg-88. ATP is bound by residues 89 to 91 (GMR), Glu-99, and 124 to 130 (WIFTSSS).

It belongs to the bacterial CoaD family. Homohexamer. Mg(2+) is required as a cofactor.

The protein localises to the cytoplasm. The catalysed reaction is (R)-4'-phosphopantetheine + ATP + H(+) = 3'-dephospho-CoA + diphosphate. Its pathway is cofactor biosynthesis; coenzyme A biosynthesis; CoA from (R)-pantothenate: step 4/5. Reversibly transfers an adenylyl group from ATP to 4'-phosphopantetheine, yielding dephospho-CoA (dPCoA) and pyrophosphate. The sequence is that of Phosphopantetheine adenylyltransferase from Desulfatibacillum aliphaticivorans.